Consider the following 60-residue polypeptide: Mastoparan-V (60 aa).

Residues M1–A27 form the signal peptide. 4 AXPX repeats span residues A27–V30, A31–L34, A35–N38, and A41–E44. Positions D28–A45 are excised as a propeptide. Residue L59 is modified to Leucine amide.

Belongs to the MCD family. Mastoparan subfamily. As to expression, expressed by the venom gland.

The protein localises to the secreted. The protein resides in the target cell membrane. Its function is as follows. Antimicrobial and mast cell degranulating peptide. Has broad spectrum antibacterial activity against both Gram-positive and Gram-negative bacteria (S.aureus MIC=32-64 ug/ml, S.xylosus MIC=3 ug/ml, S.alactolyticus MIC=16 ug/ml, C.koseri MIC=4 ug/ml, E.coli MIC=8 ug/ml, K.pneumoniae MIC=64 ug/ml, P.aerugiosa MIC=256 ug/ml, S.choleraesuis MIC=32 ug/ml, S.typhimurium MIC=32 ug/ml, V.parahamelytics MIC=32 ug/ml). Affects membrane permeability of E.coli. Shows hemolytic activities on sheep, chicken and human erythrocytes. Its mast cell degranulation activity may be related to the activation of G-protein coupled receptors in mast cells as well as interaction with other proteins located in cell endosomal membranes in the mast cells. This Vespa velutina flavitarsus (Asian hornet) protein is Mastoparan-V.